We begin with the raw amino-acid sequence, 434 residues long: uncharacterized protein (434 aa).

Lys-216 bears the N6-(pyridoxal phosphate)lysine mark.

This is an uncharacterized protein from Schizosaccharomyces pombe (strain 972 / ATCC 24843) (Fission yeast).